Here is a 463-residue protein sequence, read N- to C-terminus: MPLTLLQDWCRGEHLNTRRCMLILGIPEDCGEDEFEETLQEACRHLGRYRVIGRMFRREENAQAILLELAQDIDYALLPREIPGKGGPWEVIVKPRNSDGEFLNRLNRFLEEERRTVSDMNRVLGSDTNCSAPRVTISPEFWTWAQTLGAAVQPLLEQMLYRELRVFSGNTISIPGALAFDAWLEHTTEMLQMWQVPEGEKRRRLMECLRGPALQVVSGLRASNASITVEECLAALQQVFGPVESHKIAQVKLCKAYQEAGEKVSSFVLRLEPLLQRAVENNVVSRRNVNQTRLKRVLSGATLPDKLRDKLKLMKQRRKPPGFLALVKLLREEEEWEATLGPDRESLEGLEVAPRPPARITGVGAVPLPASGNSFDARPSQGYRRRRGRGQHRRGGVARAGSRGSRKRKRHTFCYSCGEDGHIRVQCINPSNLLLVKQKKQAAVESGNGNWAWDKSHPKSKAK.

A disordered region spans residues 363-410 (VGAVPLPASGNSFDARPSQGYRRRRGRGQHRRGGVARAGSRGSRKRKR). The span at 383-396 (YRRRRGRGQHRRGG) shows a compositional bias: basic residues. Residues 412-429 (TFCYSCGEDGHIRVQCIN) form a CCHC-type zinc finger. A disordered region spans residues 440–463 (KQAAVESGNGNWAWDKSHPKSKAK).

It belongs to the PNMA family. Expressed at high levels in the brain and testis. Expressed at lower levels in the heart, trachea and kidney.

The protein resides in the nucleus. The protein localises to the nucleolus. This Homo sapiens (Human) protein is Paraneoplastic antigen Ma3 (PNMA3).